A 628-amino-acid polypeptide reads, in one-letter code: Probable potassium transport system protein Kup (628 aa).

11 helical membrane passes run 56 to 76, 109 to 129, 141 to 161, 174 to 194, 209 to 229, 253 to 273, 295 to 315, 343 to 363, 372 to 392, 400 to 420, and 425 to 445; these read ILSL…VLLI, LILG…TPAI, AAPG…TLLF, FFGP…VVHI, ALAF…AVVL, WFSL…AMLL, LIVL…TAAF, IYVP…VVTF, AYGI…FFVI, WALC…FFAA, and ILDG…LMMT.

Belongs to the HAK/KUP transporter (TC 2.A.72) family.

The protein localises to the cell inner membrane. It carries out the reaction K(+)(in) + H(+)(in) = K(+)(out) + H(+)(out). Functionally, transport of potassium into the cell. Likely operates as a K(+):H(+) symporter. This is Probable potassium transport system protein Kup from Methylibium petroleiphilum (strain ATCC BAA-1232 / LMG 22953 / PM1).